A 135-amino-acid polypeptide reads, in one-letter code: MLLLRWPTFCCLWVFGLGQLEQTELSVTRATDESAQISCIVSLPYFSNTAIHWYRQKAKKFEYLIYVSTNYNQRPLGGKNKKIEASKDFQTSTSTLKINYLKKEDEATYYCAVCRSGTSWVKIFAKGTKLVVIPP.

Residues 1 to 18 form the signal peptide; the sequence is MLLLRWPTFCCLWVFGLG. The tract at residues 19-114 is v segment; the sequence is QLEQTELSVT…DEATYYCAVC (96 aa). The interval 115-135 is j segment; it reads RSGTSWVKIFAKGTKLVVIPP.

In Mus musculus (Mouse), this protein is T-cell receptor gamma chain V region 5/10-13 (Tcrg-V1).